The following is a 523-amino-acid chain: BTB/POZ domain-containing protein 3 (523 aa).

Residues F85–R114 form an ANK repeat. BTB domains follow at residues T167–Y223 and H306–P373.

As to quaternary structure, interacts with cul3. Post-translationally, ubiquitinated and targeted for cul3-dependent degradation.

It localises to the cytoplasm. The protein operates within protein modification; protein ubiquitination. Probable substrate-specific adapter of an E3 ubiquitin-protein ligase complex which mediates the ubiquitination and subsequent proteasomal degradation of target proteins. The chain is BTB/POZ domain-containing protein 3 (btb3) from Schizosaccharomyces pombe (strain 972 / ATCC 24843) (Fission yeast).